A 639-amino-acid polypeptide reads, in one-letter code: DNA primase (639 aa).

Residues 41-65 (CPFHNEKSPSFHVRPNHGHFHCFGC) form a CHC2-type zinc finger. In terms of domain architecture, Toprim spans 262-348 (HQAVVVEGYT…AGQSFVAVAP (87 aa)). Positions 268, 319, and 321 each coordinate Mg(2+). Positions 460-479 (RAAQRPTAGPPTELAVRPDP) are disordered.

This sequence belongs to the DnaG primase family. As to quaternary structure, monomer. Interacts with DnaB. Zn(2+) is required as a cofactor. Requires Mg(2+) as cofactor.

It carries out the reaction ssDNA + n NTP = ssDNA/pppN(pN)n-1 hybrid + (n-1) diphosphate.. RNA polymerase that catalyzes the synthesis of short RNA molecules used as primers for DNA polymerase during DNA replication. The chain is DNA primase from Mycobacterium bovis (strain ATCC BAA-935 / AF2122/97).